The chain runs to 340 residues: DnaJ homolog subfamily B member 1 (340 aa).

The 69-residue stretch at 2 to 70 (GKDYYQTLGL…REIFDRYGEE (69 aa)) folds into the J domain. Threonine 307 carries the phosphothreonine modification.

Interacts with DNAJC3. Interacts with HSF1 (via transactivation domain); this interaction results in the inhibition of heat shock- and HSF1-induced transcriptional activity during the attenuation and recovery phase period of the heat shock response. Interacts with BAG3.

The protein resides in the cytoplasm. The protein localises to the nucleus. It is found in the nucleolus. Its function is as follows. Interacts with HSP70 and can stimulate its ATPase activity. Stimulates the association between HSC70 and HIP. Negatively regulates heat shock-induced HSF1 transcriptional activity during the attenuation and recovery phase period of the heat shock response. Stimulates ATP hydrolysis and the folding of unfolded proteins mediated by HSPA1A/B (in vitro). The protein is DnaJ homolog subfamily B member 1 (DNAJB1) of Homo sapiens (Human).